The chain runs to 271 residues: Shikimate dehydrogenase (NADP(+)) (271 aa).

Residues 14-16 (SLS) and Thr61 each bind shikimate. Lys65 functions as the Proton acceptor in the catalytic mechanism. 2 residues coordinate shikimate: Asn86 and Asp101. NADP(+) contacts are provided by residues 125-129 (GAGGA) and Ile212. Tyr214 is a binding site for shikimate. Gly235 lines the NADP(+) pocket.

The protein belongs to the shikimate dehydrogenase family. In terms of assembly, homodimer.

It carries out the reaction shikimate + NADP(+) = 3-dehydroshikimate + NADPH + H(+). It participates in metabolic intermediate biosynthesis; chorismate biosynthesis; chorismate from D-erythrose 4-phosphate and phosphoenolpyruvate: step 4/7. Involved in the biosynthesis of the chorismate, which leads to the biosynthesis of aromatic amino acids. Catalyzes the reversible NADPH linked reduction of 3-dehydroshikimate (DHSA) to yield shikimate (SA). The polypeptide is Shikimate dehydrogenase (NADP(+)) (Clostridium perfringens (strain SM101 / Type A)).